Reading from the N-terminus, the 962-residue chain is pH-response regulator protein palF/prr-3 (962 aa).

Disordered regions lie at residues 1-43, 225-326, 568-675, and 689-962; these read MGPF…DSST, APPK…THPS, TDSN…PDEN, and RLLP…RYER. Positions 237 to 246 are enriched in basic residues; that stretch reads ISKRAKKKRP. Composition is skewed to polar residues over residues 297 to 307, 314 to 326, and 581 to 596; these read GFSQAPRSVSH, SGDSAASLSTHPS, and PSLTHTPSVTGGSNYV. Composition is skewed to low complexity over residues 696–722 and 738–747; these read PIAAASSSSFSAAVPSPSASSHVPDSS and PTPAATPATA. Positions 793-805 are enriched in basic and acidic residues; it reads TEDKQELERRRLL. Residues 830 to 839 are compositionally biased toward low complexity; the sequence is AGPSGSRAGP. Positions 840-849 are enriched in pro residues; sequence SAPPPAPPVA. Low complexity predominate over residues 913–928; it reads PSSPVLAPASAFFPAS. Residues 929 to 949 are compositionally biased toward polar residues; the sequence is GSGNVHDSPREQGQQARSDSS.

Belongs to the arrestin family. PalF/RIM8 subfamily.

Required for the proteolytic cleavage of the transcription factor pacc-1 in response to alkaline ambient pH. The protein is pH-response regulator protein palF/prr-3 (prr-3) of Neurospora crassa (strain ATCC 24698 / 74-OR23-1A / CBS 708.71 / DSM 1257 / FGSC 987).